The chain runs to 122 residues: Large ribosomal subunit protein bL12 (122 aa).

It belongs to the bacterial ribosomal protein bL12 family. As to quaternary structure, homodimer. Part of the ribosomal stalk of the 50S ribosomal subunit. Forms a multimeric L10(L12)X complex, where L10 forms an elongated spine to which 2 to 4 L12 dimers bind in a sequential fashion. Binds GTP-bound translation factors.

Forms part of the ribosomal stalk which helps the ribosome interact with GTP-bound translation factors. Is thus essential for accurate translation. This chain is Large ribosomal subunit protein bL12, found in Shewanella loihica (strain ATCC BAA-1088 / PV-4).